Consider the following 151-residue polypeptide: Small ribosomal subunit protein uS9 (151 aa).

The protein belongs to the universal ribosomal protein uS9 family.

The sequence is that of Small ribosomal subunit protein uS9 (RpS16) from Spodoptera frugiperda (Fall armyworm).